The chain runs to 416 residues: ATP-dependent Clp protease ATP-binding subunit ClpX (416 aa).

The ClpX-type ZB domain occupies 1–54 (MFKFGDEKGQLKCSFCGKSQEQVRKLVAGPGVYICDECIELCNEIIEEELNDDV). 4 residues coordinate Zn(2+): Cys-13, Cys-16, Cys-35, and Cys-38. 117-124 (PTGCGKTL) is a binding site for ATP.

This sequence belongs to the ClpX chaperone family. In terms of assembly, component of the ClpX-ClpP complex. Forms a hexameric ring that, in the presence of ATP, binds to fourteen ClpP subunits assembled into a disk-like structure with a central cavity, resembling the structure of eukaryotic proteasomes.

ATP-dependent specificity component of the Clp protease. It directs the protease to specific substrates. Can perform chaperone functions in the absence of ClpP. The protein is ATP-dependent Clp protease ATP-binding subunit ClpX of Halothermothrix orenii (strain H 168 / OCM 544 / DSM 9562).